The following is a 1203-amino-acid chain: Probable phospholipid-transporting ATPase 11 (1203 aa).

Residues 1 to 71 are Cytoplasmic-facing; it reads MTKCRRRRLH…STKYTLASFI (71 aa). A helical membrane pass occupies residues 72 to 93; it reads PKSLFEQFRRVANFYFLVTGVL. At 94-97 the chain is on the extracellular side; sequence SLTA. Residues 98-120 form a helical membrane-spanning segment; it reads LSPYSPISALLPLTFVIAASMVK. Over 121–303 the chain is Cytoplasmic; that stretch reads EAIEDWGRKK…SRIERKMDKI (183 aa). A helical transmembrane segment spans residues 304–325; sequence IYLMFGVVFLMSFIGSIVFGIE. At 326 to 363 the chain is on the extracellular side; the sequence is TREDRVRNGGRTERWYLRPDNADIFFDPDRAPMAAVYH. Residues 364 to 381 form a helical membrane-spanning segment; that stretch reads FFTAVMLYSYFIPISLYV. At 382 to 921 the chain is on the cytoplasmic side; the sequence is SIEIVKVLQS…HGHWCYSRIS (540 aa). D429 functions as the 4-aspartylphosphate intermediate in the catalytic mechanism. D866 and D870 together coordinate Mg(2+). The chain crosses the membrane as a helical span at residues 922–941; the sequence is SMICYFFYKNITFGVTVFLY. Topologically, residues 942–955 are extracellular; the sequence is EAYTSFSAQPAYND. Residues 956-975 traverse the membrane as a helical segment; it reads WFLSLFNVFFSSLPVIALGV. Over 976–1005 the chain is Cytoplasmic; the sequence is FDQDVSARYCYKFPLLYQEGVQNLLFSWKR. Residues 1006–1028 traverse the membrane as a helical segment; that stretch reads IIGWMFNGVFTALAIFFLCKESL. Residues 1029–1041 are Extracellular-facing; that stretch reads KHQLYNPNGKTAG. The chain crosses the membrane as a helical span at residues 1042-1064; sequence REILGGTMYTCVVWVVNLQMALA. Residues 1065-1070 lie on the Cytoplasmic side of the membrane; that stretch reads ISYFTW. Residues 1071 to 1091 form a helical membrane-spanning segment; it reads LQHIVIWGSVAFWYIFLMIYG. Over 1092-1108 the chain is Extracellular; the sequence is AITPSFSTDAYKVFIEA. The chain crosses the membrane as a helical span at residues 1109-1133; sequence LAPAPSYWLTTLFVMFFALIPFFVF. The Cytoplasmic segment spans residues 1134 to 1203; the sequence is KSVQMRFFPG…DQLNKNFIAF (70 aa).

This sequence belongs to the cation transport ATPase (P-type) (TC 3.A.3) family. Type IV subfamily.

It is found in the membrane. The enzyme catalyses ATP + H2O + phospholipidSide 1 = ADP + phosphate + phospholipidSide 2.. Involved in transport of phospholipids. The chain is Probable phospholipid-transporting ATPase 11 from Arabidopsis thaliana (Mouse-ear cress).